The following is a 432-amino-acid chain: Enolase (432 aa).

Glutamine 163 lines the (2R)-2-phosphoglycerate pocket. The Proton donor role is filled by glutamate 205. Residues aspartate 242, glutamate 285, and aspartate 312 each contribute to the Mg(2+) site. The (2R)-2-phosphoglycerate site is built by lysine 337, arginine 366, serine 367, and lysine 388. Catalysis depends on lysine 337, which acts as the Proton acceptor.

Belongs to the enolase family. Mg(2+) is required as a cofactor.

It localises to the cytoplasm. Its subcellular location is the secreted. The protein localises to the cell surface. It catalyses the reaction (2R)-2-phosphoglycerate = phosphoenolpyruvate + H2O. It participates in carbohydrate degradation; glycolysis; pyruvate from D-glyceraldehyde 3-phosphate: step 4/5. Its function is as follows. Catalyzes the reversible conversion of 2-phosphoglycerate (2-PG) into phosphoenolpyruvate (PEP). It is essential for the degradation of carbohydrates via glycolysis. In Bifidobacterium adolescentis (strain ATCC 15703 / DSM 20083 / NCTC 11814 / E194a), this protein is Enolase.